The chain runs to 391 residues: Decapping nuclease RAI1 (391 aa).

Glu-174 is an a divalent metal cation binding site. Substrate is bound at residue Glu-223. 3 residues coordinate a divalent metal cation: Asp-225, Glu-244, and Leu-245. Lys-246 and Gln-270 together coordinate substrate.

This sequence belongs to the DXO/Dom3Z family. As to quaternary structure, interacts with RAT1; the interaction is direct, stabilizes RAT1 protein structure and stimulates its exoribonuclease activity. The interaction also stimulates RAI1 pyrophosphohydrolase activity, probably by recruiting it to mRNA substrates. A divalent metal cation serves as cofactor.

Its subcellular location is the nucleus. The enzyme catalyses a 5'-end NAD(+)-phospho-ribonucleoside in mRNA + H2O = a 5'-end phospho-ribonucleoside in mRNA + NAD(+) + H(+). It catalyses the reaction a 5'-end (N(7)-methyl 5'-triphosphoguanosine)-ribonucleoside-ribonucleotide in mRNA + H2O = a (N(7)-methyl 5'-triphosphoguanosine)-nucleoside + a 5'-end phospho-ribonucleoside in mRNA + H(+). The catalysed reaction is a 5'-end triphospho-ribonucleoside in mRNA + H2O = a 5'-end phospho-ribonucleoside in mRNA + diphosphate + H(+). Functionally, decapping enzyme for NAD-capped RNAs: specifically hydrolyzes the nicotinamide adenine dinucleotide (NAD) cap from a subset of RNAs by removing the entire NAD moiety from the 5'-end of an NAD-capped RNA. The NAD-cap is present at the 5'-end of some RNAs and snoRNAs. In contrast to the canonical 5'-end N7 methylguanosine (m7G) cap, the NAD cap promotes mRNA decay. Also acts as a non-canonical decapping enzyme that removes the entire cap structure of m7G capped or incompletely capped RNAs. Has decapping activity toward incomplete 5'-end m7G cap mRNAs such as unmethylated 5'-end-capped RNA (cap0), while it has no activity toward 2'-O-ribose methylated m7G cap (cap1). Also possesses RNA 5'-pyrophosphohydrolase activity by hydrolyzing the 5'-end triphosphate to release pyrophosphates. Stimulates exoribonuclease activity of Rat1, allowing it to degrade RNAs with stable secondary structure more effectively. This chain is Decapping nuclease RAI1, found in Candida albicans (strain SC5314 / ATCC MYA-2876) (Yeast).